Reading from the N-terminus, the 882-residue chain is Alanine--tRNA ligase (882 aa).

Zn(2+) contacts are provided by His-574, His-578, Cys-682, and His-686. The tract at residues 853-882 is disordered; that stretch reads GGRGGGKGALAQGGGLDPRKAREALPGLLP. The segment covering 854 to 868 has biased composition (gly residues); sequence GRGGGKGALAQGGGL.

It belongs to the class-II aminoacyl-tRNA synthetase family. Requires Zn(2+) as cofactor.

Its subcellular location is the cytoplasm. It catalyses the reaction tRNA(Ala) + L-alanine + ATP = L-alanyl-tRNA(Ala) + AMP + diphosphate. In terms of biological role, catalyzes the attachment of alanine to tRNA(Ala) in a two-step reaction: alanine is first activated by ATP to form Ala-AMP and then transferred to the acceptor end of tRNA(Ala). Also edits incorrectly charged Ser-tRNA(Ala) and Gly-tRNA(Ala) via its editing domain. The chain is Alanine--tRNA ligase from Thermus thermophilus (strain ATCC 27634 / DSM 579 / HB8).